Here is a 208-residue protein sequence, read N- to C-terminus: GTP cyclohydrolase 1 (208 aa).

3 residues coordinate Zn(2+): C89, H92, and C163.

It belongs to the GTP cyclohydrolase I family. As to quaternary structure, homomer.

It carries out the reaction GTP + H2O = 7,8-dihydroneopterin 3'-triphosphate + formate + H(+). Its pathway is cofactor biosynthesis; 7,8-dihydroneopterin triphosphate biosynthesis; 7,8-dihydroneopterin triphosphate from GTP: step 1/1. The polypeptide is GTP cyclohydrolase 1 (Saccharolobus islandicus (strain L.S.2.15 / Lassen #1) (Sulfolobus islandicus)).